A 210-amino-acid chain; its full sequence is SAP domain-containing ribonucleoprotein (210 aa).

At A2 the chain carries N-acetylalanine. An SAP domain is found at 8–42; the sequence is LHKLKLAELKQECLARGLETKGIKQDLINRLQAYL. Position 10 is an N6-acetyllysine (K10). A compositionally biased stretch (acidic residues) spans 45–64; the sequence is HAEEEANEEDVLGDETEEEE. The segment at 45–87 is disordered; it reads HAEEEANEEDVLGDETEEEEPKPIELPVKEEEPPEKAVDMASE. Basic and acidic residues predominate over residues 65-87; it reads PKPIELPVKEEEPPEKAVDMASE. K142 is modified (N6-acetyllysine). Residues 162-210 form a disordered region; the sequence is SSISRKSEDDEKLKKRKERFGIVTSSAGTGTTEDTEAKKRKRAERFGIA. The residue at position 163 (S163) is a Phosphoserine. The span at 184–193 shows a compositional bias: polar residues; it reads VTSSAGTGTT.

The protein belongs to the SAP domain-containing ribonucleoprotein family. In terms of assembly, interacts with DDX39A. Interacts with FUS. Interacts (via the C-terminal domain) with DDX39B; the interaction is direct and facilitates RNA binding of DDX39B. Component of the transcription/export (TREX) complex at least composed of ALYREF/THOC4, DDX39B, SARNP/CIP29, CHTOP and the THO subcomplex; TREX seems to have dynamic structure involving ATP-dependent remodeling; in the complex interacts directly with DDX39B in a ATP-dependent manner which bridges it to ALYREF/THOC4.

Its subcellular location is the nucleus. It is found in the nucleus speckle. Binds both single-stranded and double-stranded DNA with higher affinity for the single-stranded form. Specifically binds to scaffold/matrix attachment region DNA. Also binds single-stranded RNA. Enhances RNA unwinding activity of DDX39A. May participate in important transcriptional or translational control of cell growth, metabolism and carcinogenesis. Component of the TREX complex which is thought to couple mRNA transcription, processing and nuclear export, and specifically associates with spliced mRNA and not with unspliced pre-mRNA. The TREX complex is recruited to spliced mRNAs by a transcription-independent mechanism, binds to mRNA upstream of the exon-junction complex (EJC) and is recruited in a splicing- and cap-dependent manner to a region near the 5' end of the mRNA where it functions in mRNA export to the cytoplasm via the TAP/NXF1 pathway. Associates with DDX39B, which facilitates RNA binding of DDX39B and likely plays a role in mRNA export. In Mus musculus (Mouse), this protein is SAP domain-containing ribonucleoprotein (Sarnp).